A 41-amino-acid chain; its full sequence is Ornatin-A3 (41 aa).

Residues 33 to 35 (RGD) carry the Cell attachment site motif.

Belongs to the ornatin family.

Its subcellular location is the secreted. Potent inhibitor of fibrinogen interaction with platelet receptors expressed on glycoprotein IIb-IIIa complex. May prevent blood from clotting during either feeding and/or storage of ingested blood. This Placobdella ornata (Turtle leech) protein is Ornatin-A3.